The sequence spans 379 residues: MRVIGLMSGTSVDGIDAALVEIQGEADAIEIELLGFTTYSYPSKLREKILAVCAGEKLSALEFAALDDEIAHSFATAARQLQERYGKAELIGSHGQTIFHRPPNGNLGLSWQLGRGEAIAQQTKLKTVSNFRRADLAAGGQGAPLVPKVDAYLLADPTKHRCIQNLGGIGNVTYLPPKNQTDWENYVIGWDTGPGNVLLDLAIQKLTNGAQAYDQDGIWASQGTPHLDLVERWLADPFIEQLPPKSTGREYFGVDFLEQCWRDAQDLQLSEADWLASLTEFTALTVQRNYELFLPQLPDEIFLCGGGCRNSYLRKRLQAAFGNQIPVRSTDDLGLNHDAKEAIAFAVLAYWRIKEFPGNLPKVTGAPCPVLLGEIHCPY.

Gly9–Asp16 is a binding site for ATP.

It belongs to the anhydro-N-acetylmuramic acid kinase family.

It catalyses the reaction 1,6-anhydro-N-acetyl-beta-muramate + ATP + H2O = N-acetyl-D-muramate 6-phosphate + ADP + H(+). Its pathway is amino-sugar metabolism; 1,6-anhydro-N-acetylmuramate degradation. It functions in the pathway cell wall biogenesis; peptidoglycan recycling. Catalyzes the specific phosphorylation of 1,6-anhydro-N-acetylmuramic acid (anhMurNAc) with the simultaneous cleavage of the 1,6-anhydro ring, generating MurNAc-6-P. Is required for the utilization of anhMurNAc either imported from the medium or derived from its own cell wall murein, and thus plays a role in cell wall recycling. The polypeptide is Anhydro-N-acetylmuramic acid kinase (Picosynechococcus sp. (strain ATCC 27264 / PCC 7002 / PR-6) (Agmenellum quadruplicatum)).